Reading from the N-terminus, the 775-residue chain is Homoaconitase, mitochondrial (775 aa).

Residues 1–29 constitute a mitochondrion transit peptide; it reads MQSRLMPSGGPGRRWAFLRVPSTPQRRAF. [4Fe-4S] cluster-binding residues include C392, C461, and C464.

The protein belongs to the aconitase/IPM isomerase family. Requires [4Fe-4S] cluster as cofactor.

Its subcellular location is the mitochondrion. It catalyses the reaction (2R,3S)-homoisocitrate = cis-homoaconitate + H2O. It functions in the pathway amino-acid biosynthesis; L-lysine biosynthesis via AAA pathway; L-alpha-aminoadipate from 2-oxoglutarate: step 3/5. Catalyzes the reversible hydration of cis-homoaconitate to (2R,3S)-homoisocitrate, a step in the alpha-aminoadipate pathway for lysine biosynthesis. This is Homoaconitase, mitochondrial (lys4) from Aspergillus oryzae (strain ATCC 42149 / RIB 40) (Yellow koji mold).